A 348-amino-acid chain; its full sequence is Protein RecA (348 aa).

Residue 67–74 participates in ATP binding; the sequence is GPESSGKT.

The protein belongs to the RecA family.

It is found in the cytoplasm. Can catalyze the hydrolysis of ATP in the presence of single-stranded DNA, the ATP-dependent uptake of single-stranded DNA by duplex DNA, and the ATP-dependent hybridization of homologous single-stranded DNAs. It interacts with LexA causing its activation and leading to its autocatalytic cleavage. In Kineococcus radiotolerans (strain ATCC BAA-149 / DSM 14245 / SRS30216), this protein is Protein RecA.